The following is a 312-amino-acid chain: tRNA dimethylallyltransferase (312 aa).

19-26 (GPSGSGKS) serves as a coordination point for ATP. Residue 21–26 (SGSGKS) coordinates substrate. The interval 44–47 (DSLS) is interaction with substrate tRNA.

It belongs to the IPP transferase family. In terms of assembly, monomer. Mg(2+) serves as cofactor.

It carries out the reaction adenosine(37) in tRNA + dimethylallyl diphosphate = N(6)-dimethylallyladenosine(37) in tRNA + diphosphate. Catalyzes the transfer of a dimethylallyl group onto the adenine at position 37 in tRNAs that read codons beginning with uridine, leading to the formation of N6-(dimethylallyl)adenosine (i(6)A). The polypeptide is tRNA dimethylallyltransferase (Helicobacter pylori (strain J99 / ATCC 700824) (Campylobacter pylori J99)).